The primary structure comprises 241 residues: DNA repair protein RecO (241 aa).

Belongs to the RecO family.

Its function is as follows. Involved in DNA repair and RecF pathway recombination. In Roseobacter denitrificans (strain ATCC 33942 / OCh 114) (Erythrobacter sp. (strain OCh 114)), this protein is DNA repair protein RecO.